Consider the following 296-residue polypeptide: Malonyl-[acyl-carrier protein] O-methyltransferase (296 aa).

It belongs to the methyltransferase superfamily.

It carries out the reaction malonyl-[ACP] + S-adenosyl-L-methionine = malonyl-[ACP] methyl ester + S-adenosyl-L-homocysteine. Its pathway is cofactor biosynthesis; biotin biosynthesis. In terms of biological role, converts the free carboxyl group of a malonyl-thioester to its methyl ester by transfer of a methyl group from S-adenosyl-L-methionine (SAM). It allows to synthesize pimeloyl-ACP via the fatty acid synthetic pathway. The sequence is that of Malonyl-[acyl-carrier protein] O-methyltransferase from Methylovorus sp. (strain MP688).